Reading from the N-terminus, the 78-residue chain is Metallothionein-like protein type 2 (78 aa).

It belongs to the metallothionein superfamily. Type 15 family.

Metallothioneins have a high content of cysteine residues that bind various heavy metals. This chain is Metallothionein-like protein type 2, found in Musa acuminata (Banana).